Reading from the N-terminus, the 78-residue chain is Small ribosomal subunit protein bS18B (78 aa).

Belongs to the bacterial ribosomal protein bS18 family. Part of the 30S ribosomal subunit. Forms a tight heterodimer with protein bS6.

Binds as a heterodimer with protein bS6 to the central domain of the 16S rRNA, where it helps stabilize the platform of the 30S subunit. This Streptomyces griseus subsp. griseus (strain JCM 4626 / CBS 651.72 / NBRC 13350 / KCC S-0626 / ISP 5235) protein is Small ribosomal subunit protein bS18B.